The chain runs to 383 residues: Neuropeptide Y receptor type 1 (383 aa).

Residues 1–44 are Extracellular-facing; sequence MNSTSFSQVENHSIYYNFSEKNSRFLAFENDDCHLPLAMIFTLA. N-linked (GlcNAc...) asparagine glycosylation is found at asparagine 2, asparagine 11, and asparagine 17. The helical transmembrane segment at 45–65 threads the bilayer; sequence LAYGAVIILGVSGNLALIIII. Residues 66-76 lie on the Cytoplasmic side of the membrane; that stretch reads LKQKEMRNVTN. The helical transmembrane segment at 77–97 threads the bilayer; that stretch reads ILIVNLSFSDLLVAIMCLPFT. Over 98–116 the chain is Extracellular; the sequence is FVYTLMDHWVFGEAMCKLN. Cysteine 113 and cysteine 198 are disulfide-bonded. The chain crosses the membrane as a helical span at residues 117–137; it reads PFVQCVSITVSIFSLVLIAVE. Residues 138–154 lie on the Cytoplasmic side of the membrane; it reads RHQLIINPRGWRPNNRH. The chain crosses the membrane as a helical span at residues 155-175; it reads AYVGIAVIWVLAVASSLPFLI. Topologically, residues 176 to 211 are extracellular; that stretch reads YQVLTDEPFQNVTLDAFKDKYVCFDKFPSDSHRLSY. Residue asparagine 186 is glycosylated (N-linked (GlcNAc...) asparagine). Residues 212–232 form a helical membrane-spanning segment; the sequence is TTLLLVLQYFGPLCFIFICYF. Topologically, residues 233-260 are cytoplasmic; sequence KIYVRLKRRNSMMDKMRDNKYRSSEAKR. Residues 261–281 traverse the membrane as a helical segment; it reads INIMLLSIVVAFAVCWLPLTI. Topologically, residues 282–299 are extracellular; sequence FNTVFDWDHQIIATCNHN. Residues 300 to 320 form a helical membrane-spanning segment; that stretch reads LLFLLCHLTAMISTCVNPIFY. Residues 321 to 383 are Cytoplasmic-facing; the sequence is GFLNKNFQRD…KIHTDDNEKI (63 aa). Residue cysteine 338 is the site of S-palmitoyl cysteine attachment. Residue serine 368 is modified to Phosphoserine.

Belongs to the G-protein coupled receptor 1 family.

It is found in the cell membrane. Its function is as follows. Receptor for neuropeptide Y and peptide YY. The protein is Neuropeptide Y receptor type 1 (NPY1R) of Bos taurus (Bovine).